The following is a 393-amino-acid chain: Acyltransferase ato1 (393 aa).

The protein belongs to the lysine N-acyltransferase mbtK family.

The protein operates within siderophore biosynthesis; ferrichrome biosynthesis. Functionally, L-ornithine N(5)-monooxygenase; part of the siderophore biosynthetic pathway. Omphalotus olearius produces ferrichrome A, but no other siderophore has been detected. Ferrichrome A consists of a hexapeptide ring made up of one glycine, two serine, and three N(5)-hydroxyornithine amino acid residues, the latter acylated by trans-(alpha-methyl)-glutaconic acid residues. The biosynthesis of ferrichrome A depends on the hydroxylation of ornithine to N(5)-hydroxyornithine, catalyzed by the monooxygenase omo1. The second step, the acylation of N(5)-hydroxy-L-ornithine is probably catalyzed by the N-acyltransferase ato1. Finally, assembly of ferrichrome A is catalyzed by the nonribosomal peptide synthase (NRPS) fso1. The sequence is that of Acyltransferase ato1 from Omphalotus olearius (Jack o'lantern).